Consider the following 269-residue polypeptide: Major capsid protein P2 (269 aa).

As to quaternary structure, homotrimer.

It is found in the virion. Functionally, major capsid protein. The protein is Major capsid protein P2 (II) of Pseudoalteromonas phage PM2 (Bacteriophage PM2).